A 280-amino-acid chain; its full sequence is Small ribosomal subunit protein uS3 (280 aa).

The 69-residue stretch at 38 to 106 folds into the KH type-2 domain; the sequence is IRRLLSTGLE…QVQLNILEVR (69 aa). A disordered region spans residues 215-280; the sequence is AAAAPAGAER…PAAEPQSTES (66 aa). The span at 238–280 shows a compositional bias: low complexity; it reads SGASGTTATGTEAGRAAASADESTAAGQPAEAAPAAEPQSTES.

This sequence belongs to the universal ribosomal protein uS3 family. Part of the 30S ribosomal subunit. Forms a tight complex with proteins S10 and S14.

Binds the lower part of the 30S subunit head. Binds mRNA in the 70S ribosome, positioning it for translation. This chain is Small ribosomal subunit protein uS3, found in Mycobacterium avium (strain 104).